The sequence spans 401 residues: MRKELWLGLLLSSQAVLSTIYYKETFEPDWETRWTHSTAKSDYGKFKLTSGKFYGDKAKDAGIQTSQDAKFYAISSPIASSFSNEGKDLVLQFSVKHEQDIDCGGGYLKLLPSVDAAKFTGDTPYHIMFGPDICGATKKIHFILTYKGKNLLWKKEPRCETDTLSHTYTAVIKADRTYEVLVDQVKKESGTLEEDWEILKPKTIPDPEDKKPADWVDEPDMVDPEDKKPEDWDKEPAQIPDPDATQPDDWDEEEDGKWEAPMISNPKYKGEWKAKKIPNPAYKGVWKPRDIPNPEYEADDKVHIFDEIAAVGFDLWQVKSGTIFDNIIVTDSLAEAKAFYDQTNGATKDAEKKAFDSAEADKRKKEEDERKKQEEEEKKTAEEDEDDDDEEEEEDDKKDEL.

A signal peptide spans 1–18 (MRKELWLGLLLSSQAVLS). Cys103 and Cys134 form a disulfide bridge. Residues Tyr107, Lys109, Tyr125, and Asp132 each contribute to the an alpha-D-glucoside site. Tandem repeats lie at residues 187-198 (KESGTLEEDWEI), 206-217 (DPEDKKPADWVD), 223-234 (DPEDKKPEDWDK), 241-252 (DPDATQPDDWDE), 256-266 (GKWEAPMISNP), 270-280 (GEWKAKKIPNP), and 284-294 (GVWKPRDIPNP). The 4 X approximate repeats stretch occupies residues 187–252 (KESGTLEEDW…DATQPDDWDE (66 aa)). Composition is skewed to basic and acidic residues over residues 199 to 214 (LKPKTIPDPEDKKPAD) and 224 to 236 (PEDKKPEDWDKEP). The interval 199-263 (LKPKTIPDPE…EDGKWEAPMI (65 aa)) is disordered. A compositionally biased stretch (acidic residues) spans 246–256 (QPDDWDEEEDG). Residues 256 to 294 (GKWEAPMISNPKYKGEWKAKKIPNPAYKGVWKPRDIPNP) form a 3 X approximate repeats region. Position 314 (Asp314) interacts with an alpha-D-glucoside. The segment at 341-401 (DQTNGATKDA…EEEDDKKDEL (61 aa)) is disordered. Positions 348–381 (KDAEKKAFDSAEADKRKKEEDERKKQEEEEKKTA) are enriched in basic and acidic residues. A compositionally biased stretch (acidic residues) spans 382 to 401 (EEDEDDDDEEEEEDDKKDEL). The Prevents secretion from ER motif lies at 398 to 401 (KDEL).

This sequence belongs to the calreticulin family.

It localises to the endoplasmic reticulum lumen. In terms of biological role, molecular calcium-binding chaperone promoting folding, oligomeric assembly and quality control in the ER via the calreticulin/calnexin cycle. This lectin may interact transiently with almost all of the monoglucosylated glycoproteins that are synthesized in the ER. This chain is Calreticulin, found in Euglena gracilis.